Consider the following 370-residue polypeptide: UDP-N-acetylglucosamine--N-acetylmuramyl-(pentapeptide) pyrophosphoryl-undecaprenol N-acetylglucosamine transferase (370 aa).

Residues 10 to 12, Asn-124, Arg-166, Ser-198, Ile-252, and Gln-297 contribute to the UDP-N-acetyl-alpha-D-glucosamine site; that span reads TGG.

The protein belongs to the glycosyltransferase 28 family. MurG subfamily.

Its subcellular location is the cell membrane. The catalysed reaction is di-trans,octa-cis-undecaprenyl diphospho-N-acetyl-alpha-D-muramoyl-L-alanyl-D-glutamyl-meso-2,6-diaminopimeloyl-D-alanyl-D-alanine + UDP-N-acetyl-alpha-D-glucosamine = di-trans,octa-cis-undecaprenyl diphospho-[N-acetyl-alpha-D-glucosaminyl-(1-&gt;4)]-N-acetyl-alpha-D-muramoyl-L-alanyl-D-glutamyl-meso-2,6-diaminopimeloyl-D-alanyl-D-alanine + UDP + H(+). The protein operates within cell wall biogenesis; peptidoglycan biosynthesis. Cell wall formation. Catalyzes the transfer of a GlcNAc subunit on undecaprenyl-pyrophosphoryl-MurNAc-pentapeptide (lipid intermediate I) to form undecaprenyl-pyrophosphoryl-MurNAc-(pentapeptide)GlcNAc (lipid intermediate II). This is UDP-N-acetylglucosamine--N-acetylmuramyl-(pentapeptide) pyrophosphoryl-undecaprenol N-acetylglucosamine transferase from Finegoldia magna (strain ATCC 29328 / DSM 20472 / WAL 2508) (Peptostreptococcus magnus).